The sequence spans 143 residues: Large ribosomal subunit protein uL15 (143 aa).

Positions 1 to 54 (MQLNSIKPAPGAKHPKRRVGRGIGSGLGKTAGRGHKGQKSRAGGFHKVGFEGGQ) are disordered. Over residues 21-31 (RGIGSGLGKTA) the composition is skewed to gly residues.

The protein belongs to the universal ribosomal protein uL15 family. In terms of assembly, part of the 50S ribosomal subunit.

In terms of biological role, binds to the 23S rRNA. The polypeptide is Large ribosomal subunit protein uL15 (Nitrosospira multiformis (strain ATCC 25196 / NCIMB 11849 / C 71)).